Consider the following 478-residue polypeptide: Allene oxide synthase 2 (478 aa).

Heme b is bound by residues Lys-88, His-119, and Lys-123. Asn-278 serves as a coordination point for (13S)-hydroperoxy-(9Z,11E,15Z)-octadecatrienoate. Positions 427 and 429 each coordinate heme b.

This sequence belongs to the cytochrome P450 family. The cofactor is heme b. In terms of tissue distribution, weakly expressed in roots, shoots, leaves and flowers.

It carries out the reaction (13S)-hydroperoxy-(9Z,11E,15Z)-octadecatrienoate = (9Z,13S,15Z)-12,13-epoxyoctadeca-9,11,15-trienoate + H2O. It functions in the pathway lipid metabolism; oxylipin biosynthesis. Functionally, involved in the biosynthesis of jasmonic acid, a growth regulator that is implicated also as a signaling molecule in plant defense. Converts 13-hydroperoxylinolenic acid to 12,13-epoxylinolenic acid. This Oryza sativa subsp. japonica (Rice) protein is Allene oxide synthase 2 (CYP74A2).